The sequence spans 93 residues: Acylphosphatase (93 aa).

Positions 6–92 (RAHVWVGGKV…EGLTHFEVLR (87 aa)) constitute an Acylphosphatase-like domain. Residues arginine 21 and asparagine 39 contribute to the active site.

The protein belongs to the acylphosphatase family.

The catalysed reaction is an acyl phosphate + H2O = a carboxylate + phosphate + H(+). The sequence is that of Acylphosphatase (acyP) from Gloeobacter violaceus (strain ATCC 29082 / PCC 7421).